The primary structure comprises 367 residues: Peptidyl-prolyl cis-trans isomerase D (367 aa).

Residues Phe-7–Glu-171 enclose the PPIase cyclophilin-type domain. TPR repeat units follow at residues Ile-213 to Tyr-246, Ile-264 to Ala-297, and Ala-302 to Asp-335.

The protein belongs to the cyclophilin-type PPIase family. PPIase D subfamily.

The protein localises to the cytoplasm. It carries out the reaction [protein]-peptidylproline (omega=180) = [protein]-peptidylproline (omega=0). Its function is as follows. PPIases accelerate the folding of proteins. It catalyzes the cis-trans isomerization of proline imidic peptide bonds in oligopeptides. In Yarrowia lipolytica (strain CLIB 122 / E 150) (Yeast), this protein is Peptidyl-prolyl cis-trans isomerase D (CPR6).